Here is a 410-residue protein sequence, read N- to C-terminus: 2,3-bisphosphoglycerate-independent phosphoglycerate mutase (410 aa).

This sequence belongs to the BPG-independent phosphoglycerate mutase family. A-PGAM subfamily.

The catalysed reaction is (2R)-2-phosphoglycerate = (2R)-3-phosphoglycerate. Its pathway is carbohydrate degradation; glycolysis; pyruvate from D-glyceraldehyde 3-phosphate: step 3/5. Functionally, catalyzes the interconversion of 2-phosphoglycerate and 3-phosphoglycerate. This Pyrococcus abyssi (strain GE5 / Orsay) protein is 2,3-bisphosphoglycerate-independent phosphoglycerate mutase.